The following is a 1164-amino-acid chain: Phytochrome D (1164 aa).

A disordered region spans residues 1–55; sequence MVSGGGSKTSGGEAASSGHRRSRHTSAAEQAQSSANKALRSQNQQPQNHGGGTES. A compositionally biased stretch (polar residues) spans 25-55; sequence TSAAEQAQSSANKALRSQNQQPQNHGGGTES. The region spanning 255–437 is the GAF domain; the sequence is DIKLLCDTVV…AFGLQLNMEL (183 aa). Cysteine 360 provides a ligand contact to phytochromobilin. 2 consecutive PAS domains span residues 656-727 and 790-861; these read VARE…LKGD and DYKA…MIVL. The 220-residue stretch at 938-1157 folds into the Histidine kinase domain; that stretch reads YIFQVIKNPL…LIVIELPVPL (220 aa).

The protein belongs to the phytochrome family. Homodimer. Post-translationally, contains one covalently linked phytochromobilin chromophore.

Regulatory photoreceptor which exists in two forms that are reversibly interconvertible by light: the Pr form that absorbs maximally in the red region of the spectrum and the Pfr form that absorbs maximally in the far-red region. Photoconversion of Pr to Pfr induces an array of morphogenic responses, whereas reconversion of Pfr to Pr cancels the induction of those responses. Pfr controls the expression of a number of nuclear genes including those encoding the small subunit of ribulose-bisphosphate carboxylase, chlorophyll A/B binding protein, protochlorophyllide reductase, rRNA, etc. It also controls the expression of its own gene(s) in a negative feedback fashion. The protein is Phytochrome D (PHYD) of Arabidopsis thaliana (Mouse-ear cress).